A 241-amino-acid polypeptide reads, in one-letter code: Phosphoribosylaminoimidazole-succinocarboxamide synthase (241 aa).

This sequence belongs to the SAICAR synthetase family.

The catalysed reaction is 5-amino-1-(5-phospho-D-ribosyl)imidazole-4-carboxylate + L-aspartate + ATP = (2S)-2-[5-amino-1-(5-phospho-beta-D-ribosyl)imidazole-4-carboxamido]succinate + ADP + phosphate + 2 H(+). The protein operates within purine metabolism; IMP biosynthesis via de novo pathway; 5-amino-1-(5-phospho-D-ribosyl)imidazole-4-carboxamide from 5-amino-1-(5-phospho-D-ribosyl)imidazole-4-carboxylate: step 1/2. The protein is Phosphoribosylaminoimidazole-succinocarboxamide synthase of Oenococcus oeni (strain ATCC BAA-331 / PSU-1).